Consider the following 212-residue polypeptide: Orotate phosphoribosyltransferase (212 aa).

Residues Arg97, Lys101, His103, and 123–131 (EDLISTGGS) each bind 5-phospho-alpha-D-ribose 1-diphosphate. An orotate-binding site is contributed by Ser127.

This sequence belongs to the purine/pyrimidine phosphoribosyltransferase family. PyrE subfamily. As to quaternary structure, homodimer. It depends on Mg(2+) as a cofactor.

The catalysed reaction is orotidine 5'-phosphate + diphosphate = orotate + 5-phospho-alpha-D-ribose 1-diphosphate. The protein operates within pyrimidine metabolism; UMP biosynthesis via de novo pathway; UMP from orotate: step 1/2. Catalyzes the transfer of a ribosyl phosphate group from 5-phosphoribose 1-diphosphate to orotate, leading to the formation of orotidine monophosphate (OMP). The sequence is that of Orotate phosphoribosyltransferase from Bacteroides thetaiotaomicron (strain ATCC 29148 / DSM 2079 / JCM 5827 / CCUG 10774 / NCTC 10582 / VPI-5482 / E50).